The primary structure comprises 132 residues: Small ribosomal subunit protein uS8 (132 aa).

The protein belongs to the universal ribosomal protein uS8 family. As to quaternary structure, part of the 30S ribosomal subunit. Contacts proteins S5 and S12.

Its function is as follows. One of the primary rRNA binding proteins, it binds directly to 16S rRNA central domain where it helps coordinate assembly of the platform of the 30S subunit. This chain is Small ribosomal subunit protein uS8, found in Borrelia garinii subsp. bavariensis (strain ATCC BAA-2496 / DSM 23469 / PBi) (Borreliella bavariensis).